A 264-amino-acid polypeptide reads, in one-letter code: S-adenosylmethionine decarboxylase proenzyme (264 aa).

Serine 112 acts as the Schiff-base intermediate with substrate; via pyruvic acid in catalysis. Serine 112 carries the post-translational modification Pyruvic acid (Ser); by autocatalysis. Histidine 117 functions as the Proton acceptor; for processing activity in the catalytic mechanism. Cysteine 140 acts as the Proton donor; for catalytic activity in catalysis.

Belongs to the prokaryotic AdoMetDC family. Type 2 subfamily. Heterooctamer of four alpha and four beta chains arranged as a tetramer of alpha/beta heterodimers. Pyruvate serves as cofactor. Post-translationally, is synthesized initially as an inactive proenzyme. Formation of the active enzyme involves a self-maturation process in which the active site pyruvoyl group is generated from an internal serine residue via an autocatalytic post-translational modification. Two non-identical subunits are generated from the proenzyme in this reaction, and the pyruvate is formed at the N-terminus of the alpha chain, which is derived from the carboxyl end of the proenzyme. The post-translation cleavage follows an unusual pathway, termed non-hydrolytic serinolysis, in which the side chain hydroxyl group of the serine supplies its oxygen atom to form the C-terminus of the beta chain, while the remainder of the serine residue undergoes an oxidative deamination to produce ammonia and the pyruvoyl group blocking the N-terminus of the alpha chain.

It catalyses the reaction S-adenosyl-L-methionine + H(+) = S-adenosyl 3-(methylsulfanyl)propylamine + CO2. Its pathway is amine and polyamine biosynthesis; S-adenosylmethioninamine biosynthesis; S-adenosylmethioninamine from S-adenosyl-L-methionine: step 1/1. Functionally, catalyzes the decarboxylation of S-adenosylmethionine to S-adenosylmethioninamine (dcAdoMet), the propylamine donor required for the synthesis of the polyamines spermine and spermidine from the diamine putrescine. This chain is S-adenosylmethionine decarboxylase proenzyme, found in Salmonella gallinarum (strain 287/91 / NCTC 13346).